A 253-amino-acid polypeptide reads, in one-letter code: REF/SRPP-like protein Os05g0151300/LOC_Os05g05940 (253 aa).

The segment at 1 to 26 (MADSGSDAPISNRPEEEVTVEKTPEM) is disordered. Basic and acidic residues predominate over residues 13–26 (RPEEEVTVEKTPEM).

This sequence belongs to the REF/SRPP family.

This is REF/SRPP-like protein Os05g0151300/LOC_Os05g05940 from Oryza sativa subsp. japonica (Rice).